The chain runs to 238 residues: Large ribosomal subunit protein uL2 (238 aa).

Residues 201–238 (PFGGGGRQHPGRPKTVSRNTPPGRKVGSIAARRTGVGH) are disordered.

Belongs to the universal ribosomal protein uL2 family. In terms of assembly, part of the 50S ribosomal subunit. Forms a bridge to the 30S subunit in the 70S ribosome.

Its function is as follows. One of the primary rRNA binding proteins. Required for association of the 30S and 50S subunits to form the 70S ribosome, for tRNA binding and peptide bond formation. It has been suggested to have peptidyltransferase activity; this is somewhat controversial. Makes several contacts with the 16S rRNA in the 70S ribosome. The sequence is that of Large ribosomal subunit protein uL2 from Methanocella arvoryzae (strain DSM 22066 / NBRC 105507 / MRE50).